The chain runs to 330 residues: DNA-directed RNA polymerase subunit alpha (330 aa).

The tract at residues 1–231 is alpha N-terminal domain (alpha-NTD); that stretch reads MQTNLLKPKT…EQLAVFAQLE (231 aa). Residues 250–330 are alpha C-terminal domain (alpha-CTD); the sequence is FDPILLRPVD…SWPPAGLDKR (81 aa).

This sequence belongs to the RNA polymerase alpha chain family. In terms of assembly, homodimer. The RNAP catalytic core consists of 2 alpha, 1 beta, 1 beta' and 1 omega subunit. When a sigma factor is associated with the core the holoenzyme is formed, which can initiate transcription.

The enzyme catalyses RNA(n) + a ribonucleoside 5'-triphosphate = RNA(n+1) + diphosphate. Functionally, DNA-dependent RNA polymerase catalyzes the transcription of DNA into RNA using the four ribonucleoside triphosphates as substrates. The sequence is that of DNA-directed RNA polymerase subunit alpha from Polaromonas naphthalenivorans (strain CJ2).